We begin with the raw amino-acid sequence, 1061 residues long: Lysine-specific demethylase jmjd-3.1 (1061 aa).

Disordered regions lie at residues 30–49 (VKNS…MRPV) and 256–417 (KSLS…KRRT). Residues 271 to 287 (QHTNSVGSSIGTTSGDS) show a composition bias toward polar residues. Residues 310 to 320 (STSSEFTETTS) show a composition bias toward low complexity. Positions 321–330 (VANQTESNAG) are enriched in polar residues. The segment at 369 to 417 (KKKEQSATEPPIPRTKRAYTKNPNTIRKRRMKKNQSDDEEDDGPPKRRT) is required for nuclear localization. The interval 418-759 (INYQIEFRDA…FGTNIDLLSE (342 aa)) is required for binding of unc-3 and for function in Y-to-PDA transdifferentiation. A JmjC domain is found at 760-923 (NFKKQMNEIE…LATSIVAHDH (164 aa)). Fe cation is bound by residues histidine 811, glutamate 813, and histidine 891. The Zn(2+) site is built by cysteine 998, cysteine 1001, cysteine 1025, and cysteine 1028.

It belongs to the UTX family. In terms of assembly, interacts with wdr-5.1 and unc-3. Fe(2+) serves as cofactor. Mainly expressed in head and tail.

It localises to the nucleus. In terms of biological role, histone demethylase that specifically demethylates trimethylated 'Lys-27' of histone H3, a mark associated with transcriptional repression, thereby playing a central role in the histone code. Involved in the transcriptional regulation of the heat shock response, unfolded protein response and possibly other stress response target genes. Required for gonad development and organization. Required for the robust transdifferentiation of the Y rectal epithelial cell to the PDA motor neuron during larval development. Acts cell-autonomously in Y-to-PDA transdifferentiation, which depends on the demethylase activity and on recognition of the H3 tail. Cooperates with set-2 and unc-3 to ensure robust Y-to-PDA transdifferentiation. Promotes mitochondrial stress-induced longevity. Involved in lifespan regulation. The polypeptide is Lysine-specific demethylase jmjd-3.1 (Caenorhabditis elegans).